The sequence spans 572 residues: Oxygen-dependent choline dehydrogenase (572 aa).

Position 9–38 (aspartate 9–glutamate 38) interacts with FAD. Histidine 477 acts as the Proton acceptor in catalysis.

The protein belongs to the GMC oxidoreductase family. FAD is required as a cofactor.

The catalysed reaction is choline + A = betaine aldehyde + AH2. It catalyses the reaction betaine aldehyde + NAD(+) + H2O = glycine betaine + NADH + 2 H(+). Its pathway is amine and polyamine biosynthesis; betaine biosynthesis via choline pathway; betaine aldehyde from choline (cytochrome c reductase route): step 1/1. In terms of biological role, involved in the biosynthesis of the osmoprotectant glycine betaine. Catalyzes the oxidation of choline to betaine aldehyde and betaine aldehyde to glycine betaine at the same rate. This chain is Oxygen-dependent choline dehydrogenase, found in Staphylococcus epidermidis (strain ATCC 12228 / FDA PCI 1200).